The chain runs to 260 residues: Snake venom serine protease salmobin (260 aa).

The N-terminal stretch at 1 to 18 (MVLIKVLANHLILQLSYA) is a signal peptide. Residues 19-24 (QKSSEL) constitute a propeptide that is removed on maturation. The Peptidase S1 domain maps to 25-251 (VIGGDECNIN…YTDWIQSIIA (227 aa)). 6 cysteine pairs are disulfide-bonded: Cys-31/Cys-165, Cys-52/Cys-68, Cys-102/Cys-258, Cys-144/Cys-212, Cys-176/Cys-191, and Cys-202/Cys-227. The Charge relay system role is filled by His-67. A glycan (N-linked (GlcNAc...) asparagine) is linked at Asn-105. The active-site Charge relay system is Asp-112. N-linked (GlcNAc...) asparagine glycosylation is found at Asn-123 and Asn-156. The active-site Charge relay system is the Ser-206.

It belongs to the peptidase S1 family. Snake venom subfamily. In terms of assembly, monomer. Expressed by the venom gland.

The protein resides in the secreted. Its function is as follows. Snake venom serine protease that may act in the hemostasis system of the prey. This Gloydius halys (Chinese water mocassin) protein is Snake venom serine protease salmobin.